A 158-amino-acid chain; its full sequence is Small ribosomal subunit protein uS9 (158 aa).

The protein belongs to the universal ribosomal protein uS9 family.

The sequence is that of Small ribosomal subunit protein uS9 from Brucella canis (strain ATCC 23365 / NCTC 10854 / RM-666).